The following is a 448-amino-acid chain: Trigger factor (448 aa).

A PPIase FKBP-type domain is found at 172–257 (GDRVTVDFVG…MKKIEWPHLP (86 aa)).

The protein belongs to the FKBP-type PPIase family. Tig subfamily.

Its subcellular location is the cytoplasm. It catalyses the reaction [protein]-peptidylproline (omega=180) = [protein]-peptidylproline (omega=0). Involved in protein export. Acts as a chaperone by maintaining the newly synthesized protein in an open conformation. Functions as a peptidyl-prolyl cis-trans isomerase. The sequence is that of Trigger factor from Paraburkholderia phymatum (strain DSM 17167 / CIP 108236 / LMG 21445 / STM815) (Burkholderia phymatum).